Consider the following 418-residue polypeptide: (+)-T-muurolol synthase ((2E,6E)-farnesyl diphosphate cyclizing) (418 aa).

Aspartate 83 and aspartate 88 together coordinate Mg(2+). A DDXXXD motif motif is present at residues 83-88 (DDEYCD). Arginine 179 lines the substrate pocket. Mg(2+) contacts are provided by asparagine 225 and serine 229. Substrate is bound at residue lysine 232. Glutamate 233 serves as a coordination point for Mg(2+). 312-313 (RY) contacts substrate. The interval 354–418 (LPEPGSDGAD…QQSTWRREHR (65 aa)) is disordered. Polar residues predominate over residues 402–412 (ASRSSGLQQST).

It belongs to the terpene synthase family. Mg(2+) is required as a cofactor.

It catalyses the reaction (2E,6E)-farnesyl diphosphate + H2O = (+)-T-muurolol + diphosphate. It participates in secondary metabolite biosynthesis; terpenoid biosynthesis. In terms of biological role, catalyzes the conversion of (2E,6E)-farnesyl diphosphate (FPP) into (+)-T-muurolol via a 1,10-cyclization, which requires isomerization of FPP to nerolidyl diphosphate (NPP) and then abstraction of the pyrophosphate from intermediate NPP leading to a (E,Z)-germacradienyl (helminthogermacradienyl) cation. This is (+)-T-muurolol synthase ((2E,6E)-farnesyl diphosphate cyclizing) from Streptomyces clavuligerus.